The sequence spans 36 residues: Peroxiredoxin-4 (36 aa).

It belongs to the peroxiredoxin family. AhpC/Prx1 subfamily. Homodimer; disulfide-linked, upon oxidation. Venom gland.

The protein localises to the secreted. It catalyses the reaction a hydroperoxide + [thioredoxin]-dithiol = an alcohol + [thioredoxin]-disulfide + H2O. In terms of biological role, venom peroxiredoxin enzyme that may play a role as part of a redox pathway leading to the structural/functional diversification of toxins through a disulfide bond engineering mechanism. The polypeptide is Peroxiredoxin-4 (Crotalus atrox (Western diamondback rattlesnake)).